The sequence spans 627 residues: Carene synthase 3, chloroplastic (627 aa).

The transit peptide at 1–36 (MSVISIVPLASKSCLYKSLMSSTHELKALCRPIATL) directs the protein to the chloroplast. Aspartate 378, aspartate 382, and aspartate 530 together coordinate Mg(2+). The DDXXD motif motif lies at 378–382 (DDMYD).

It belongs to the terpene synthase family. Tpsd subfamily. Mg(2+) is required as a cofactor. Requires Mn(2+) as cofactor.

The protein resides in the plastid. It is found in the chloroplast. The enzyme catalyses (2E)-geranyl diphosphate = (+)-car-3-ene + diphosphate. It functions in the pathway terpene metabolism; oleoresin biosynthesis. Functionally, terpene synthase (TPS) involved in defensive oleoresin formation in conifers in response to insect attack or other injury. This Picea sitchensis (Sitka spruce) protein is Carene synthase 3, chloroplastic (TPS-3car3).